The chain runs to 224 residues: ATP-dependent dethiobiotin synthetase BioD (224 aa).

14–19 (GIGKTV) is an ATP binding site. Threonine 18 provides a ligand contact to Mg(2+). Residue lysine 39 is part of the active site. Serine 43 provides a ligand contact to substrate. ATP-binding positions include aspartate 56, 117 to 120 (EGVG), and 177 to 178 (NE). 2 residues coordinate Mg(2+): aspartate 56 and glutamate 117.

It belongs to the dethiobiotin synthetase family. In terms of assembly, homodimer. Requires Mg(2+) as cofactor.

It localises to the cytoplasm. It carries out the reaction (7R,8S)-7,8-diammoniononanoate + CO2 + ATP = (4R,5S)-dethiobiotin + ADP + phosphate + 3 H(+). It participates in cofactor biosynthesis; biotin biosynthesis; biotin from 7,8-diaminononanoate: step 1/2. Catalyzes a mechanistically unusual reaction, the ATP-dependent insertion of CO2 between the N7 and N8 nitrogen atoms of 7,8-diaminopelargonic acid (DAPA, also called 7,8-diammoniononanoate) to form a ureido ring. The protein is ATP-dependent dethiobiotin synthetase BioD of Xanthomonas campestris pv. campestris (strain 8004).